The following is an 81-amino-acid chain: Small ribosomal subunit protein bS16 (81 aa).

Belongs to the bacterial ribosomal protein bS16 family.

The sequence is that of Small ribosomal subunit protein bS16 from Teredinibacter turnerae (strain ATCC 39867 / T7901).